A 786-amino-acid chain; its full sequence is Pentatricopeptide repeat-containing protein 10, chloroplastic (786 aa).

Positions 1–71 (MEATGRGLFP…HQTPTPPHSF (71 aa)) are disordered. The N-terminal 95 residues, 1-95 (MEATGRGLFP…HPLPTLAAFL (95 aa)), are a transit peptide targeting the chloroplast. Pro residues predominate over residues 27 to 36 (PAAPPPPSPS). Residues 37-50 (SLPLDSLLLHLTAP) show a composition bias toward low complexity. 18 PPR repeats span residues 137-167 (DASALEMVVRALGREGQHDAVCALLDETPLP), 173-207 (DVRAYTTVLHALSRAGRYERALELFAELRRQGVAP), 208-243 (TLVTYNVVLDVYGRMGRSWPRIVALLDEMRAAGVEP), 244-278 (DGFTASTVIAACCRDGLVDEAVAFFEDLKARGHAP), 279-313 (CVVTYNALLQVFGKAGNYTEALRVLGEMEQNGCQP), 314-348 (DAVTYNELAGTYARAGFFEEAARCLDTMASKGLLP), 349-383 (NAFTYNTVMTAYGNVGKVDEALALFDQMKKTGFVP), 384-418 (NVNTYNLVLGMLGKKSRFTVMLEMLGEMSRSGCTP), 419-453 (NRVTWNTMLAVCGKRGMEDYVTRVLEGMRSCGVEL), 454-488 (SRDTYNTLIAAYGRCGSRTNAFKMYNEMTSAGFTP), 489-523 (CITTYNALLNVLSRQGDWSTAQSIVSKMRTKGFKP), 524-558 (NEQSYSLLLQCYAKGGNVAGIAAIENEVYGSGAVF), 560-594 (SWVILRTLVIANFKCRRLDGMETAFQEVKARGYNP), 595-629 (DLVIFNSMLSIYAKNGMYSKATEVFDSIKRSGLSP), 630-664 (DLITYNSLMDMYAKCSESWEAEKILNQLKCSQTMK), 666-700 (DVVSYNTVINGFCKQGLVKEAQRVLSEMVADGMAP), 701-735 (CAVTYHTLVGGYSSLEMFSEAREVIGYMVQHGLKP), and 736-770 (MELTYRRVVESYCRAKRFEEARGFLSEVSETDLDF).

The protein belongs to the PPR family. P subfamily. As to quaternary structure, forms homodimers.

Its subcellular location is the plastid. It is found in the chloroplast stroma. Involved in chloroplast mRNA stability. Binds specifically to two intergenic RNA regions of similar sequence located in the chloroplast atpH 5'-UTR and psaJ 3'-UTR, and serves as a barrier to RNA decay. Binding to a specific site in the intergenic region of the chloroplast atpH is sufficient to block 5'-3' and 3'-5' exonucleases. Acts as a protein barrier to block mRNA degradation by exonucleases, and defines processed mRNA termini in chloroplasts. Remodels the structure of the atpH ribosome-binding site in a manner that can account for its ability to enhance translation. Stabilizes a RNA 3'-end downstream from psaI. Binds atpH RNA as a monomer. This Zea mays (Maize) protein is Pentatricopeptide repeat-containing protein 10, chloroplastic.